The primary structure comprises 329 residues: Diaminopimelate epimerase (329 aa).

Asparagine 14 and asparagine 73 together coordinate substrate. The Proton donor role is filled by cysteine 82. Substrate is bound by residues 83–84 (GN), asparagine 170, asparagine 206, and 224–225 (ER). Cysteine 233 serves as the catalytic Proton acceptor. Residue 234–235 (GT) participates in substrate binding.

The protein belongs to the diaminopimelate epimerase family. As to quaternary structure, homodimer.

It localises to the cytoplasm. The enzyme catalyses (2S,6S)-2,6-diaminopimelate = meso-2,6-diaminopimelate. The protein operates within amino-acid biosynthesis; L-lysine biosynthesis via DAP pathway; DL-2,6-diaminopimelate from LL-2,6-diaminopimelate: step 1/1. Catalyzes the stereoinversion of LL-2,6-diaminopimelate (L,L-DAP) to meso-diaminopimelate (meso-DAP), a precursor of L-lysine and an essential component of the bacterial peptidoglycan. In Listeria monocytogenes serotype 4b (strain F2365), this protein is Diaminopimelate epimerase.